Consider the following 212-residue polypeptide: ATP-dependent dethiobiotin synthetase BioD (212 aa).

12 to 17 contributes to the ATP binding site; the sequence is DCGKTF. T16 contributes to the Mg(2+) binding site. The active site involves K33. S37 contributes to the substrate binding site. ATP contacts are provided by residues D50, 110–113, and 170–171; these read EGAG and NC. 2 residues coordinate Mg(2+): D50 and E110.

This sequence belongs to the dethiobiotin synthetase family. Homodimer. Mg(2+) serves as cofactor.

The protein localises to the cytoplasm. It carries out the reaction (7R,8S)-7,8-diammoniononanoate + CO2 + ATP = (4R,5S)-dethiobiotin + ADP + phosphate + 3 H(+). The protein operates within cofactor biosynthesis; biotin biosynthesis; biotin from 7,8-diaminononanoate: step 1/2. Catalyzes a mechanistically unusual reaction, the ATP-dependent insertion of CO2 between the N7 and N8 nitrogen atoms of 7,8-diaminopelargonic acid (DAPA, also called 7,8-diammoniononanoate) to form a ureido ring. This chain is ATP-dependent dethiobiotin synthetase BioD, found in Legionella pneumophila (strain Paris).